Here is a 269-residue protein sequence, read N- to C-terminus: Imidazole glycerol phosphate synthase subunit HisF (269 aa).

Catalysis depends on residues aspartate 23 and aspartate 142.

It belongs to the HisA/HisF family. Heterodimer of HisH and HisF.

The protein resides in the cytoplasm. It catalyses the reaction 5-[(5-phospho-1-deoxy-D-ribulos-1-ylimino)methylamino]-1-(5-phospho-beta-D-ribosyl)imidazole-4-carboxamide + L-glutamine = D-erythro-1-(imidazol-4-yl)glycerol 3-phosphate + 5-amino-1-(5-phospho-beta-D-ribosyl)imidazole-4-carboxamide + L-glutamate + H(+). It functions in the pathway amino-acid biosynthesis; L-histidine biosynthesis; L-histidine from 5-phospho-alpha-D-ribose 1-diphosphate: step 5/9. Functionally, IGPS catalyzes the conversion of PRFAR and glutamine to IGP, AICAR and glutamate. The HisF subunit catalyzes the cyclization activity that produces IGP and AICAR from PRFAR using the ammonia provided by the HisH subunit. This Bordetella pertussis (strain Tohama I / ATCC BAA-589 / NCTC 13251) protein is Imidazole glycerol phosphate synthase subunit HisF.